The chain runs to 484 residues: tRNA sulfurtransferase (484 aa).

Residues Q63–R167 form the THUMP domain. ATP contacts are provided by residues L185–I186, K267, G289, and Q298. C346 and C458 are oxidised to a cystine. The 79-residue stretch at I406 to P484 folds into the Rhodanese domain. The Cysteine persulfide intermediate role is filled by C458.

Belongs to the ThiI family.

It localises to the cytoplasm. The enzyme catalyses [ThiI sulfur-carrier protein]-S-sulfanyl-L-cysteine + a uridine in tRNA + 2 reduced [2Fe-2S]-[ferredoxin] + ATP + H(+) = [ThiI sulfur-carrier protein]-L-cysteine + a 4-thiouridine in tRNA + 2 oxidized [2Fe-2S]-[ferredoxin] + AMP + diphosphate. The catalysed reaction is [ThiS sulfur-carrier protein]-C-terminal Gly-Gly-AMP + S-sulfanyl-L-cysteinyl-[cysteine desulfurase] + AH2 = [ThiS sulfur-carrier protein]-C-terminal-Gly-aminoethanethioate + L-cysteinyl-[cysteine desulfurase] + A + AMP + 2 H(+). It functions in the pathway cofactor biosynthesis; thiamine diphosphate biosynthesis. Its function is as follows. Catalyzes the ATP-dependent transfer of a sulfur to tRNA to produce 4-thiouridine in position 8 of tRNAs, which functions as a near-UV photosensor. Also catalyzes the transfer of sulfur to the sulfur carrier protein ThiS, forming ThiS-thiocarboxylate. This is a step in the synthesis of thiazole, in the thiamine biosynthesis pathway. The sulfur is donated as persulfide by IscS. This Shewanella oneidensis (strain ATCC 700550 / JCM 31522 / CIP 106686 / LMG 19005 / NCIMB 14063 / MR-1) protein is tRNA sulfurtransferase.